Reading from the N-terminus, the 450-residue chain is 3-phosphoshikimate 1-carboxyvinyltransferase (450 aa).

Residues 1–25 (MSAHGDPKPMTARKGGALTGTAEVP) form a disordered region. 3-phosphoshikimate is bound by residues K28, S29, and R33. Residue K28 coordinates phosphoenolpyruvate. Phosphoenolpyruvate-binding residues include G101 and R129. 3-phosphoshikimate contacts are provided by S174, Q176, D327, and K354. Q176 is a phosphoenolpyruvate binding site. Catalysis depends on D327, which acts as the Proton acceptor. Phosphoenolpyruvate is bound by residues R358 and R403.

It belongs to the EPSP synthase family. As to quaternary structure, monomer.

The protein resides in the cytoplasm. The catalysed reaction is 3-phosphoshikimate + phosphoenolpyruvate = 5-O-(1-carboxyvinyl)-3-phosphoshikimate + phosphate. It functions in the pathway metabolic intermediate biosynthesis; chorismate biosynthesis; chorismate from D-erythrose 4-phosphate and phosphoenolpyruvate: step 6/7. Its function is as follows. Catalyzes the transfer of the enolpyruvyl moiety of phosphoenolpyruvate (PEP) to the 5-hydroxyl of shikimate-3-phosphate (S3P) to produce enolpyruvyl shikimate-3-phosphate and inorganic phosphate. This chain is 3-phosphoshikimate 1-carboxyvinyltransferase, found in Jannaschia sp. (strain CCS1).